Reading from the N-terminus, the 1312-residue chain is AT-rich interactive domain-containing protein 4B (1312 aa).

Disordered regions lie at residues 124–166 (PLTN…EDDR) and 266–306 (KTEL…EPFP). Phosphoserine occurs at positions 276, 295, and 296. Acidic residues predominate over residues 277 to 305 (EAEEEEEEEDDEKEKEDNSSEEEEEIEPF). Residues 306 to 398 (PEERENFLQQ…YLYGFEEYCR (93 aa)) enclose the ARID domain. Residues Lys-429, Lys-440, and Lys-462 each participate in a glycyl lysine isopeptide (Lys-Gly) (interchain with G-Cter in SUMO2) cross-link. 5 disordered regions span residues 458–577 (EIER…KVQV), 635–680 (IKHR…EMVS), 708–894 (QASE…TTGF), 909–1212 (LNNS…NRLP), and 1252–1288 (SEVASIDRRRKRLKKKERESAATSSSSSSPSSSSITA). The segment at 465–473 (IKPSLGSKK) is antigenic epitope. A Phosphoserine modification is found at Ser-483. Basic and acidic residues predominate over residues 483-496 (SDQEKEVNIKKPED). Residue Lys-517 forms a Glycyl lysine isopeptide (Lys-Gly) (interchain with G-Cter in SUMO2) linkage. Acidic residues predominate over residues 532-567 (NKEEDEDDEEAEEEEEEEEEEEDEDDDDNNEEEEFE). Residues 572–624 (GMKVQVRYGRGKNQKMYEASIKDSDVEGGEVLYLVHYCGWNVRYDEWIKADKI) form the Tudor-knot domain. The segment covering 643–656 (NKLDKEKDKDEKYS) has biased composition (basic and acidic residues). Residues Ser-666, Ser-675, and Ser-717 each carry the phosphoserine modification. Composition is skewed to basic and acidic residues over residues 722–754 (ERGAQDMDNNGKEESKIDHLTNNRNDLISKEEQ) and 778–787 (SPERLRKDIE). The stretch at 728–754 (MDNNGKEESKIDHLTNNRNDLISKEEQ) forms a coiled coil. A Glycyl lysine isopeptide (Lys-Gly) (interchain with G-Cter in SUMO2) cross-link involves residue Lys-751. Phosphoserine is present on residues Ser-778 and Ser-790. Positions 788–799 (VLSEDTDYEEDE) are enriched in acidic residues. Phosphothreonine is present on Thr-793. Composition is skewed to basic and acidic residues over residues 807 to 816 (VKKDTTDKSS), 828 to 852 (CNTEECLKTGSPGKKEEKAKNKESL), 909 to 927 (LNNSDERLQNSRAKDRKDV), and 995 to 1010 (KPIEEKTVEVNDRKAE). The residue at position 1014 (Ser-1014) is a Phosphoserine. Position 1026 is a phosphothreonine (Thr-1026). The span at 1028–1037 (ESPSSVTVTE) shows a compositional bias: low complexity. Ser-1029 carries the post-translational modification Phosphoserine. Over residues 1038 to 1047 (GSRQQSSVTV) the composition is skewed to polar residues. Positions 1056 to 1065 (EEVRSIKSET) are enriched in basic and acidic residues. A compositionally biased stretch (low complexity) spans 1087–1101 (SSPAGFDASVSSSSS). The antigenic epitope stretch occupies residues 1130-1137 (KKQKRSHK). Over residues 1130–1148 (KKQKRSHKATVVNNKKKGK) the composition is skewed to basic residues. Thr-1150 carries the post-translational modification Phosphothreonine. A phosphoserine mark is found at Ser-1152, Ser-1153, Ser-1155, and Ser-1159. The span at 1162–1191 (ESITKSQPVKSVSTGMKSHSTKSPARTQSP) shows a compositional bias: polar residues. Positions 1196-1208 (KNGDKDPDLKEPS) are enriched in basic and acidic residues. The stretch at 1231-1270 (ERITILQEKLQEIRKHYLSLKSEVASIDRRRKRLKKKERE) forms a coiled coil. The segment covering 1272–1288 (AATSSSSSSPSSSSITA) has biased composition (low complexity).

In terms of assembly, component of a Sin3A corepressor complex consisting of SIN3A, SAP130, SUDS3/SAP45, SAP180, HDAC1 and HDAC2. Interacts with ARID4A. Interacts with AR. In terms of tissue distribution, highly expressed in the testis and in breast, lung, colon, pancreatic and ovarian cancers. Expressed at low levels in the thymus, prostate and ovary.

It localises to the nucleus. It is found in the cytoplasm. Functionally, acts as a transcriptional repressor. May function in the assembly and/or enzymatic activity of the Sin3A corepressor complex or in mediating interactions between the complex and other regulatory complexes. Plays a role in the regulation of epigenetic modifications at the PWS/AS imprinting center near the SNRPN promoter, where it might function as part of a complex with RB1 and ARID4A. Involved in spermatogenesis, together with ARID4A, where it functions as a transcriptional coactivator for AR (androgen receptor) and enhances expression of genes required for sperm maturation. Regulates expression of the tight junction protein CLDN3 in the testis, which is important for integrity of the blood-testis barrier. Plays a role in myeloid homeostasis where it regulates the histone methylation state of bone marrow cells and expression of various genes involved in hematopoiesis. May function as a leukemia suppressor. The protein is AT-rich interactive domain-containing protein 4B (ARID4B) of Homo sapiens (Human).